The sequence spans 194 residues: MAIIIGIDPGSRMTGYGILQQTGDKLTYIDSGTIRTDTKEMPERLKRIFNGLTRITQHHLKYADEPIYTAIEQVFMAENPDSALKLGQARGAAIAAMVALDLEVSEYTARQIKQAVCGYGAAAKEQVQDMVCRILTLDFVPQQDAADGLACAICHAHSSHSMNKLILNSAMRGRGASKKKGRWRLTEEDLGNLR.

Active-site residues include Asp-8, Glu-72, and Asp-144. Asp-8, Glu-72, and Asp-144 together coordinate Mg(2+).

It belongs to the RuvC family. Homodimer which binds Holliday junction (HJ) DNA. The HJ becomes 2-fold symmetrical on binding to RuvC with unstacked arms; it has a different conformation from HJ DNA in complex with RuvA. In the full resolvosome a probable DNA-RuvA(4)-RuvB(12)-RuvC(2) complex forms which resolves the HJ. Mg(2+) serves as cofactor.

It is found in the cytoplasm. The catalysed reaction is Endonucleolytic cleavage at a junction such as a reciprocal single-stranded crossover between two homologous DNA duplexes (Holliday junction).. Functionally, the RuvA-RuvB-RuvC complex processes Holliday junction (HJ) DNA during genetic recombination and DNA repair. Endonuclease that resolves HJ intermediates. Cleaves cruciform DNA by making single-stranded nicks across the HJ at symmetrical positions within the homologous arms, yielding a 5'-phosphate and a 3'-hydroxyl group; requires a central core of homology in the junction. The consensus cleavage sequence is 5'-(A/T)TT(C/G)-3'. Cleavage occurs on the 3'-side of the TT dinucleotide at the point of strand exchange. HJ branch migration catalyzed by RuvA-RuvB allows RuvC to scan DNA until it finds its consensus sequence, where it cleaves and resolves the cruciform DNA. This Psychrobacter arcticus (strain DSM 17307 / VKM B-2377 / 273-4) protein is Crossover junction endodeoxyribonuclease RuvC.